Here is a 37-residue protein sequence, read N- to C-terminus: Dolichyl-diphosphooligosaccharide--protein glycosyltransferase subunit 4B (37 aa).

Over methionine 1–glycine 8 the chain is Lumenal. The chain crosses the membrane as a helical span at residues phenylalanine 9–methionine 29. Residues alanine 30 to asparagine 37 lie on the Cytoplasmic side of the membrane.

It belongs to the OST4 family. Component of the oligosaccharyltransferase (OST) complex.

It localises to the endoplasmic reticulum membrane. Its function is as follows. Subunit of the oligosaccharyl transferase (OST) complex that catalyzes the initial transfer of a defined glycan (Glc(3)Man(9)GlcNAc(2) in eukaryotes) from the lipid carrier dolichol-pyrophosphate to an asparagine residue within an Asn-X-Ser/Thr consensus motif in nascent polypeptide chains, the first step in protein N-glycosylation. N-glycosylation occurs cotranslationally and the complex associates with the Sec61 complex at the channel-forming translocon complex that mediates protein translocation across the endoplasmic reticulum (ER). All subunits are required for a maximal enzyme activity. This chain is Dolichyl-diphosphooligosaccharide--protein glycosyltransferase subunit 4B (OST4B), found in Oryza sativa subsp. japonica (Rice).